The sequence spans 166 residues: Putative tRNA (cytidine(34)-2'-O)-methyltransferase (166 aa).

Positions 83, 109, 130, and 138 each coordinate S-adenosyl-L-methionine.

This sequence belongs to the class IV-like SAM-binding methyltransferase superfamily. RNA methyltransferase TrmH family. TrmL subfamily.

The protein localises to the cytoplasm. The catalysed reaction is cytidine(34) in tRNA + S-adenosyl-L-methionine = 2'-O-methylcytidine(34) in tRNA + S-adenosyl-L-homocysteine + H(+). The enzyme catalyses 5-carboxymethylaminomethyluridine(34) in tRNA(Leu) + S-adenosyl-L-methionine = 5-carboxymethylaminomethyl-2'-O-methyluridine(34) in tRNA(Leu) + S-adenosyl-L-homocysteine + H(+). Functionally, could methylate the ribose at the nucleotide 34 wobble position in tRNA. This chain is Putative tRNA (cytidine(34)-2'-O)-methyltransferase, found in Mycoplasma pneumoniae (strain ATCC 29342 / M129 / Subtype 1) (Mycoplasmoides pneumoniae).